The sequence spans 494 residues: Alanine--glyoxylate aminotransferase 2-like (494 aa).

Lysine 291 carries the post-translational modification N6-(pyridoxal phosphate)lysine.

This sequence belongs to the class-III pyridoxal-phosphate-dependent aminotransferase family. It depends on pyridoxal 5'-phosphate as a cofactor.

The sequence is that of Alanine--glyoxylate aminotransferase 2-like from Drosophila melanogaster (Fruit fly).